We begin with the raw amino-acid sequence, 319 residues long: Methionyl-tRNA formyltransferase (319 aa).

113–116 is a binding site for (6S)-5,6,7,8-tetrahydrofolate; the sequence is SLLP.

Belongs to the Fmt family.

It catalyses the reaction L-methionyl-tRNA(fMet) + (6R)-10-formyltetrahydrofolate = N-formyl-L-methionyl-tRNA(fMet) + (6S)-5,6,7,8-tetrahydrofolate + H(+). In terms of biological role, attaches a formyl group to the free amino group of methionyl-tRNA(fMet). The formyl group appears to play a dual role in the initiator identity of N-formylmethionyl-tRNA by promoting its recognition by IF2 and preventing the misappropriation of this tRNA by the elongation apparatus. This Hamiltonella defensa subsp. Acyrthosiphon pisum (strain 5AT) protein is Methionyl-tRNA formyltransferase.